Reading from the N-terminus, the 448-residue chain is Putative F-box/LRR-repeat protein At3g44810 (448 aa).

Residues 6 to 54 (TASLNCLPDELLVHVLSSLETKQAASTSVLSKRWRTLFAVRRNLDFDDS) enclose the F-box domain. 6 LRR repeats span residues 117–141 (VSEL…VFRS), 143–165 (TLVK…TCLP), 190–213 (CPAL…VSSK), 228–251 (FDWF…TYAR), 290–313 (VRNV…CKGG), and 421–443 (IVDS…SSRL).

The chain is Putative F-box/LRR-repeat protein At3g44810 from Arabidopsis thaliana (Mouse-ear cress).